Reading from the N-terminus, the 120-residue chain is Probable non-functional immunoglobulin kappa variable 2D-24 (120 aa).

Positions 1-19 (MRLLAQLLGLLMLWVPGSS) are cleaved as a signal peptide. Positions 20-120 (GDIVMTQTPL…YYCTQATQFP (101 aa)) constitute an Ig-like domain. Residues 21-43 (DIVMTQTPLSSPVTLGQPASISF) form a framework-1 region. A complementarity-determining-1 region spans residues 44 to 59 (RSSQSLVHSDGNTYLS). Positions 60–74 (WLQQRPGQPPRLLIY) are framework-2. Positions 75 to 81 (KVSNRFS) are complementarity-determining-2. Residues 82 to 113 (GVPDRFSGSGAGTDFTLKISRVEAEDVGVYYC) are framework-3. Residues 114–120 (TQATQFP) form a complementarity-determining-3 region.

Most probably, the immunoglobulin is not assembled due to incorrect folding of light chain. Immunoglobulins are composed of two identical heavy chains and two identical light chains; disulfide-linked.

The protein localises to the secreted. Its subcellular location is the cell membrane. In terms of biological role, probable non-functional open reading frame (ORF) of V region of the variable domain of immunoglobulin light chains. Non-functional ORF generally cannot participate in the synthesis of a productive immunoglobulin chain due to altered V-(D)-J or switch recombination and/or splicing site (at mRNA level) and/or conserved amino acid change (protein level). Immunoglobulins, also known as antibodies, are membrane-bound or secreted glycoproteins produced by B lymphocytes. In the recognition phase of humoral immunity, the membrane-bound immunoglobulins serve as receptors which, upon binding of a specific antigen, trigger the clonal expansion and differentiation of B lymphocytes into immunoglobulins-secreting plasma cells. Secreted immunoglobulins mediate the effector phase of humoral immunity, which results in the elimination of bound antigens. The antigen binding site is formed by the variable domain of one heavy chain, together with that of its associated light chain. Thus, each immunoglobulin has two antigen binding sites with remarkable affinity for a particular antigen. The variable domains are assembled by a process called V-(D)-J rearrangement and can then be subjected to somatic hypermutations which, after exposure to antigen and selection, allow affinity maturation for a particular antigen. This Homo sapiens (Human) protein is Probable non-functional immunoglobulin kappa variable 2D-24.